We begin with the raw amino-acid sequence, 246 residues long: Metallo-beta-lactamase IMP-1 (246 aa).

The N-terminal stretch at 1–18 (MSKLSVFFIFLFCSIATA) is a signal peptide. 5 residues coordinate Zn(2+): His95, His97, Asp99, His157, and Cys176. A beta-lactam is bound by residues Lys179 and Asn185. His215 serves as a coordination point for Zn(2+).

Belongs to the metallo-beta-lactamase superfamily. Class-B beta-lactamase family. As to quaternary structure, monomer. It depends on Zn(2+) as a cofactor.

It is found in the periplasm. It catalyses the reaction a beta-lactam + H2O = a substituted beta-amino acid. Its activity is regulated as follows. Inhibited by captopril stereoisomers, Hg(2+), Fe(2+), Cu(2+), chelating agents such as EDTA, dansyl derivatives, including dansyl-C4SH, bisthiazolidines, mercaptoacetic acid and by PMPC phosphonates. Inhibited by 3-(3-mercaptopropionylsulfanyl)-propionic acid pentafluorophenyl ester, via a covalent binding to Lys-179. Not susceptible to inactivation by the beta-lactamase-blocking agents clavulanic acid or cloxacillin. Functionally, class B beta-lactamase which confers resistance to the beta-lactam antibiotics, including penicillins, cephalosporins and carbapenems. Acts via hydrolysis of the beta-lactam ring. Has penicillin-, cephalosporin- and carbapenem-hydrolyzing activities. Has endoribonuclease activity, cleaving substrate RNAs preferentially between U/C and A, in vitro. The polypeptide is Metallo-beta-lactamase IMP-1 (Serratia marcescens).